The primary structure comprises 532 residues: Germ cell nuclear acidic-1 protein (532 aa).

The span at 1 to 10 shows a compositional bias: basic and acidic residues; the sequence is MPTPFRDLHN. Disordered stretches follow at residues 1–50, 84–181, and 213–253; these read MPTP…EPIS, REAP…GNFE, and YISE…DRKQ. The span at 14–32 shows a compositional bias: low complexity; it reads ASASSYETAWSSSFSSRRS. Composition is skewed to basic and acidic residues over residues 39-48, 94-107, and 124-133; these read SNLKEIKDEP, LLQK…RDML, and KPKEVKKALK. Over residues 213 to 235 the composition is skewed to acidic residues; the sequence is YISEESSEEESEEEEEDVDDEEY. Basic and acidic residues predominate over residues 236–251; the sequence is RESSPEVEAKISYSDR. The SprT-like domain occupies 308-398; the sequence is RRIFSAIPSE…GARCSSVFKS (91 aa). Residues 468–489 are disordered; sequence AKPVGPILSNSSKPSPPAPRRI.

This sequence belongs to the serine-aspartate repeat-containing protein (SDr) family. As to quaternary structure, interacts with top-2; this interaction allows the resolution of topoisomerase II (top-2) DNA-protein cross-links. Mainly expressed in germ cells and early embryonic, proliferating cells.

Its subcellular location is the chromosome. May play a role in DNA-protein cross-links (DPCs) clearance through a SUMO-dependent recruitment to sites of DPCs, ensuring the genomic stability by protecting germ cells and early embryos from various sources of damage. May resolve the topoisomerase II (top-2) DPCs. Limits replication stress and DNA double-strand breaks. This Caenorhabditis elegans protein is Germ cell nuclear acidic-1 protein.